A 449-amino-acid polypeptide reads, in one-letter code: Baeyer-Villiger oxidase GME11358 (449 aa).

The protein belongs to the questin oxidase family.

It participates in secondary metabolite biosynthesis. Its function is as follows. Baeyer-Villiger oxidase; part of the gene cluster that mediates the biosynthesis of dibenzodioxocinones such as pestalotiollide B, a novel class of inhibitors against cholesterol ester transfer protein (CEPT). The biosynthesis initiates from condensation of acetate and malonate units catalyzed by the non-reducing PKS pks8/GME11356. Pks8/GME11356 lacks a thioesterase (TE) domain, which is important to the cyclizing of the third ring of atrochrysone carboxylic acid, and the esterase GME11355 might play the role of TE and catalyzes the cyclization reaction of the C ring. The lactamase-like protein GME11357 (or other beta-lactamases in Pestalotiopsis microspora) probably hydrolyzes the thioester bond between the ACP of pks8/GME11356 and the intermediate to release atrochrysone carboxylic acid, which is spontaneously dehydrates to form endocrocin anthrone. Endocrocin anthrone is further converted to emodin via the endocrocin intermediate. Emodin is then oxidized by several enzymes such as the Baeyer-Villiger oxidase GME11358, the oxidoreductase GME11367, the short chain dehydrogenase/reductase GME11373, as well as by other oxidoreductases from the cluster, to modify the A and C rings and open the B ring, and finally yield monodictyphenone. The prenyltransferase GME11375 may catalyze the addition reaction between the C5 side chains and the carbon bone of dibenzodioxocinones. The remaining biochemical reactions to the final product dibenzodioxocinones should be methylation catalyzed by methyltransferase GME11366 and reduction and lactonization reaction catalyzed by a series of oxidordeuctases. The sequence is that of Baeyer-Villiger oxidase GME11358 from Pestalotiopsis microspora.